Reading from the N-terminus, the 60-residue chain is Short neurotoxin 1 (60 aa).

4 disulfide bridges follow: C3–C22, C17–C39, C41–C52, and C53–C58.

Belongs to the three-finger toxin family. Short-chain subfamily. Type I alpha-neurotoxin sub-subfamily. Expressed by the venom gland.

It localises to the secreted. In terms of biological role, binds to muscle nicotinic acetylcholine receptor (nAChR) and inhibit acetylcholine from binding to the receptor, thereby impairing neuromuscular transmission. This is Short neurotoxin 1 from Hydrophis schistosus (Beaked sea snake).